An 802-amino-acid polypeptide reads, in one-letter code: Probable inactive leucine-rich repeat receptor-like protein kinase At3g03770 (802 aa).

The N-terminal stretch at 1 to 26 is a signal peptide; sequence MEKLYCGMPLLLLVLLLASIDGSTQL. The Extracellular portion of the chain corresponds to 27–391; it reads QSSQSQTLLR…RNKVSKVGIA (365 aa). N-linked (GlcNAc...) asparagine glycans are attached at residues asparagine 52 and asparagine 83. LRR repeat units lie at residues 71–94, 104–128, 129–152, 153–176, 177–200, 201–225, 227–244, 245–268, 269–293, 294–317, and 319–341; these read EDSVTQLHIIGDNGTHMLPKSFSI, LPDVKVLTFVSLGLWGWLPQKINRL, SSLEILNVSSNFLFGPIPHELSSL, ATLQTLILDENMFSGELPDWIDSL, PSLAVLSLRKNVLNGSLPSSLSSL, SGLRVLALANNRFNGALPDLSHLTN, QVLDLEGNSFGPLFPRLS, NKLVTLILSKNKFRSAVSAEEVSS, LYQLQHLDLSYNTFVGPFPTSLMSL, PAITYLNISHNKLTGRLSANLSCN, and QLMFVDMSSNLLTGSLPTCLKPS. Asparagine 135 carries N-linked (GlcNAc...) asparagine glycosylation. Residue asparagine 190 is glycosylated (N-linked (GlcNAc...) asparagine). Asparagine 300 and asparagine 313 each carry an N-linked (GlcNAc...) asparagine glycan. A helical membrane pass occupies residues 392–412; it reads LGVTASILGVLLLAGALFVVL. Residues 413–802 lie on the Cytoplasmic side of the membrane; it reads RRLNAKKTVT…RDSGCEEHER (390 aa). The Protein kinase domain maps to 477-759; the sequence is FESSAFMGEG…FASQVQEGWL (283 aa). The segment at 761–802 is disordered; sequence NSNPSSNLGSPSPAASSLPPPSRLHVTTLESPRDSGCEEHER. A compositionally biased stretch (low complexity) spans 762–777; that stretch reads SNPSSNLGSPSPAASS. Positions 791–802 are enriched in basic and acidic residues; the sequence is SPRDSGCEEHER.

It belongs to the protein kinase superfamily. Ser/Thr protein kinase family.

It localises to the cell membrane. The chain is Probable inactive leucine-rich repeat receptor-like protein kinase At3g03770 from Arabidopsis thaliana (Mouse-ear cress).